We begin with the raw amino-acid sequence, 85 residues long: Large ribosomal subunit protein bL27 (85 aa).

A disordered region spans residues 1-22 (MAHKKAAGSTRNGRDSESKRLG).

Belongs to the bacterial ribosomal protein bL27 family.

The protein is Large ribosomal subunit protein bL27 of Pseudoalteromonas translucida (strain TAC 125).